We begin with the raw amino-acid sequence, 37 residues long: Large ribosomal subunit protein bL36c (37 aa).

The protein belongs to the bacterial ribosomal protein bL36 family.

Its subcellular location is the plastid. The protein resides in the chloroplast. The chain is Large ribosomal subunit protein bL36c from Huperzia lucidula (Shining clubmoss).